The sequence spans 128 residues: Claw keratin (128 aa).

2 tandem repeats follow at residues 83–91 (GGYGGLGGY) and 92–100 (GGYGGLGGY). The 3 X 9 AA tandem repeats, Gly-rich stretch occupies residues 83–104 (GGYGGLGGYGGYGGLGGYGGYG). One copy of the 3; approximate repeat lies at 101–109 (GGYGGFGSC).

It belongs to the avian keratin family. In terms of tissue distribution, abundantly expressed in the claw and at a low level in feather tissue.

The sequence is that of Claw keratin (CKER1) from Gallus gallus (Chicken).